The chain runs to 362 residues: F-box protein At2g14710 (362 aa).

The 47-residue stretch at 1-47 (MAHLKNLPWELIEEILSRVPPKSLVRFRTVSKQWNALFDDKTFINNH) folds into the F-box domain.

The protein is F-box protein At2g14710 of Arabidopsis thaliana (Mouse-ear cress).